Here is a 937-residue protein sequence, read N- to C-terminus: Protein SEY1 homolog (937 aa).

The Cytoplasmic portion of the chain corresponds to 1–848 (MEKGVEKTQI…ETGSKMSLKN (848 aa)). Residues 34–280 (GFSYNVIAVL…IPSDGFAQYC (247 aa)) enclose the GB1/RHD3-type G domain. 44–51 (GSQSSGKS) serves as a coordination point for GTP. Coiled coils occupy residues 319–339 (NKEIKEKSIESHNKVIENFKE) and 725–750 (YLDEIMDVLKNKLDEISENLATIIIQ). Residues 849–869 (VPVVFWIILLLFGWNEILFFI) traverse the membrane as a helical segment. Residues 870–872 (RMF) lie on the Lumenal side of the membrane. Residues 873-893 (FKLNVILPLFFAAAFIVSTFV) traverse the membrane as a helical segment. At 894–937 (YNGNTQALSYINKIIFYMAKNSYNFFKHIQAISNPPPKNVQKQE) the chain is on the cytoplasmic side.

It belongs to the TRAFAC class dynamin-like GTPase superfamily. GB1/RHD3 GTPase family. RHD3 subfamily.

It localises to the endoplasmic reticulum membrane. Functionally, probable GTP-binding protein involved in generating and maintaining the structure of the tubular endoplasmic reticulum network. This Plasmodium falciparum (isolate 3D7) protein is Protein SEY1 homolog.